A 425-amino-acid chain; its full sequence is Arogenate dehydratase 5, chloroplastic (425 aa).

The transit peptide at 1 to 38 directs the protein to the chloroplast; the sequence is MQTISPAFSCDLKSVIQPNLTAKKARYSHVNGKRVSVR. Residues 127 to 304 form the Prephenate dehydratase domain; that stretch reads RVAYQGVPGA…NVTRFLMLAR (178 aa). The region spanning 320–411 is the ACT domain; the sequence is VFAAQEHKGT…SFLRVLGSYP (92 aa).

As to expression, expressed in roots, leaves, stems, flowers and siliques. More abundant in stems and roots.

It is found in the plastid. The protein resides in the chloroplast stroma. The catalysed reaction is L-arogenate + H(+) = L-phenylalanine + CO2 + H2O. The protein operates within amino-acid biosynthesis; L-phenylalanine biosynthesis; L-phenylalanine from L-arogenate: step 1/1. Functionally, converts the prephenate produced from the shikimate-chorismate pathway into phenylalanine. The sequence is that of Arogenate dehydratase 5, chloroplastic from Arabidopsis thaliana (Mouse-ear cress).